The chain runs to 406 residues: Inner kinetochore subunit OKP1 (406 aa).

Disordered stretches follow at residues 1-37 (MAAD…SDSS) and 59-122 (TQSK…TSGE). Residues 8 to 21 (FLQNIENDSINNGQ) show a composition bias toward polar residues. Residues 26–37 (SPNRSSSESDSS) show a composition bias toward low complexity. Residues 69–78 (NSDDAEEGEI) show a composition bias toward acidic residues. Serine 70 carries the post-translational modification Phosphoserine. Composition is skewed to basic and acidic residues over residues 79–89 (EERTNKEEGQY) and 97–106 (LRFEVGKEST). Over residues 107–122 (GKLQSHLSDGSATSGE) the composition is skewed to polar residues. The stretch at 239–285 (SKRQFIQNRYSQELQNNERLEAILSREQNLLEETRKLCMNLKTNNKK) forms a coiled coil. The tract at residues 317-340 (MHPDGPVTFRNDSHELNLMLNDPI) is CTF19-MCM21 binding motif. The interaction with NKP1-NKP2 stretch occupies residues 353-400 (VLSLLPSLKEYTKKSKELKETMGQMISDSHEEEIKEVFVPHHESHQDK). Residues 379–406 (SDSHEEEIKEVFVPHHESHQDKTEEDIH) form a disordered region. Over residues 380-406 (DSHEEEIKEVFVPHHESHQDKTEEDIH) the composition is skewed to basic and acidic residues.

It belongs to the CENP-Q/OKP1 family. In terms of assembly, component of the heterotetrameric kinetochore subcomplex COMA, which consists of AME1, CTF19, MCM21 and OKP1. The COMA subcomplex is part of a larger constitutive centromere-associated network (CCAN) (also known as central kinetochore CTF19 complex in yeast), which is composed of at least AME1, CHL4, CNN1, CTF3, CTF19, IML3, MCM16, MCM21, MCM22, MHF1, MHF2, MIF2, NKP1, NKP2, OKP1 and WIP1. COMA binds the centromeric nucleosome-binding protein MIF2, and to the outer kinetochore MIND subcomplex. OKP1 interacts directly with AME1, with an NKP1-NKP2 dimer, and with CTF19-MCM21.

It is found in the nucleus. It localises to the chromosome. Its subcellular location is the centromere. The protein localises to the kinetochore. Its function is as follows. Component of the kinetochore, a multiprotein complex that assembles on centromeric DNA and attaches chromosomes to spindle microtubules, mediating chromosome segregation and sister chromatid segregation during meiosis and mitosis. Component of the inner kinetochore COMA complex, which connects centromere-associated proteins and the outer kinetochore. COMA interacts with other inner kinetochore proteins to form the inner kinetochore constitutive centromere-associated network (CCAN), which serves as a structural platform for outer kinetochore assembly. This Saccharomyces cerevisiae (strain ATCC 204508 / S288c) (Baker's yeast) protein is Inner kinetochore subunit OKP1.